We begin with the raw amino-acid sequence, 418 residues long: Serine hydroxymethyltransferase (418 aa).

Residues leucine 121 and 125 to 127 (GHL) contribute to the (6S)-5,6,7,8-tetrahydrofolate site. At lysine 230 the chain carries N6-(pyridoxal phosphate)lysine. Residue 355-357 (SPF) participates in (6S)-5,6,7,8-tetrahydrofolate binding.

It belongs to the SHMT family. Homodimer. Pyridoxal 5'-phosphate is required as a cofactor.

The protein resides in the cytoplasm. It catalyses the reaction (6R)-5,10-methylene-5,6,7,8-tetrahydrofolate + glycine + H2O = (6S)-5,6,7,8-tetrahydrofolate + L-serine. It participates in one-carbon metabolism; tetrahydrofolate interconversion. Its pathway is amino-acid biosynthesis; glycine biosynthesis; glycine from L-serine: step 1/1. Its function is as follows. Catalyzes the reversible interconversion of serine and glycine with tetrahydrofolate (THF) serving as the one-carbon carrier. This reaction serves as the major source of one-carbon groups required for the biosynthesis of purines, thymidylate, methionine, and other important biomolecules. Also exhibits THF-independent aldolase activity toward beta-hydroxyamino acids, producing glycine and aldehydes, via a retro-aldol mechanism. The polypeptide is Serine hydroxymethyltransferase (Methylococcus capsulatus (strain ATCC 33009 / NCIMB 11132 / Bath)).